A 420-amino-acid polypeptide reads, in one-letter code: MDKLVIKKGSALNGTVRISGAKNAALPLLMTSLLTDSPCRYTNVPRLRDINTTTALLRELGVEVALPAPNDIVIDASTLESVTASYDLVRTMRASILVLGPLLAKQGKANVSLPGGCAIGARPVNLHLTGLEKMGAKIEVDEGYIRAKVDGRLKGARIFMDMVSVGATENLLMAAALADGTTILENAAREPEIVDLANCLIQMGAKISGAGSDKITIEGVETLNGCDYAVLPDRIETGTFLVAAAVTGGKVRCTNAAPDTLDAVLDKLEQAGAKITTGEDWIELDMEGRKPQAVRVKTAPHPAFPTDMQAQFVTLNCVAEGTGVITETIFENRFMHVPELQRMGAEIALEANSAVSKGSSSLKGAPVMATDLRASASLVIAGLIAEGETHVNRIYHLDRGYEAIEEKLGGLGAIIERVKE.

22 to 23 provides a ligand contact to phosphoenolpyruvate; the sequence is KN. Residue R93 participates in UDP-N-acetyl-alpha-D-glucosamine binding. C117 serves as the catalytic Proton donor. C117 carries the post-translational modification 2-(S-cysteinyl)pyruvic acid O-phosphothioketal. D307 and I329 together coordinate UDP-N-acetyl-alpha-D-glucosamine.

It belongs to the EPSP synthase family. MurA subfamily.

It localises to the cytoplasm. It catalyses the reaction phosphoenolpyruvate + UDP-N-acetyl-alpha-D-glucosamine = UDP-N-acetyl-3-O-(1-carboxyvinyl)-alpha-D-glucosamine + phosphate. Its pathway is cell wall biogenesis; peptidoglycan biosynthesis. In terms of biological role, cell wall formation. Adds enolpyruvyl to UDP-N-acetylglucosamine. This is UDP-N-acetylglucosamine 1-carboxyvinyltransferase from Alteromonas mediterranea (strain DSM 17117 / CIP 110805 / LMG 28347 / Deep ecotype).